Reading from the N-terminus, the 140-residue chain is DegV domain-containing 15.5 kDa protein (140 aa).

The region spanning Gln4 to Ile140 is the DegV domain. Residues Thr61 and Ser93 each contribute to the hexadecanoate site.

Its function is as follows. May bind long-chain fatty acids, such as palmitate, and may play a role in lipid transport or fatty acid metabolism. In Staphylococcus aureus, this protein is DegV domain-containing 15.5 kDa protein.